We begin with the raw amino-acid sequence, 238 residues long: Ribonuclease PH (238 aa).

Phosphate contacts are provided by residues arginine 86 and 124 to 126 (GTR).

Belongs to the RNase PH family. As to quaternary structure, homohexameric ring arranged as a trimer of dimers.

The catalysed reaction is tRNA(n+1) + phosphate = tRNA(n) + a ribonucleoside 5'-diphosphate. In terms of biological role, phosphorolytic 3'-5' exoribonuclease that plays an important role in tRNA 3'-end maturation. Removes nucleotide residues following the 3'-CCA terminus of tRNAs; can also add nucleotides to the ends of RNA molecules by using nucleoside diphosphates as substrates, but this may not be physiologically important. Probably plays a role in initiation of 16S rRNA degradation (leading to ribosome degradation) during starvation. This is Ribonuclease PH from Psychrobacter sp. (strain PRwf-1).